Here is a 124-residue protein sequence, read N- to C-terminus: Multifunctional methyltransferase subunit TRM112 homolog A (124 aa).

A TRM112 domain is found at 2 to 120 (RLITHNMLSC…NKGIPNMLLH (119 aa)).

It belongs to the TRM112 family. As to quaternary structure, interacts with TRM9.

Its function is as follows. Acts as an activator of both rRNA/tRNA and protein methyltransferases. Required for TRM9 tRNA methyltransferase activity. Involved in the regulation of cell division progression during organ growth. Required for the expression of cell cycle-related genes, and the G2-M phase progression during organogenesis. This is Multifunctional methyltransferase subunit TRM112 homolog A from Arabidopsis thaliana (Mouse-ear cress).